A 317-amino-acid polypeptide reads, in one-letter code: WSCD family member AAEL009094 (317 aa).

The helical transmembrane segment at 8–28 (LFGLAGTILVYIGGILFLSFV) threads the bilayer. Asn-150, Asn-226, and Asn-232 each carry an N-linked (GlcNAc...) asparagine glycan.

Belongs to the WSCD family.

It is found in the membrane. This Aedes aegypti (Yellowfever mosquito) protein is WSCD family member AAEL009094.